Here is a 146-residue protein sequence, read N- to C-terminus: Hemoglobin subunit beta (146 aa).

Residues 2 to 146 form the Globin domain; sequence HWSAEEKQLI…VAHALARKYH (145 aa). H63 and H92 together coordinate heme b.

It belongs to the globin family. Heterotetramer of two alpha chains and two beta chains. As to expression, red blood cells.

In terms of biological role, involved in oxygen transport from the lung to the various peripheral tissues. The sequence is that of Hemoglobin subunit beta (HBB) from Aptenodytes forsteri (Emperor penguin).